The primary structure comprises 155 residues: 6,7-dimethyl-8-ribityllumazine synthase (155 aa).

Residues Y23, 57 to 59 (AWE), and 81 to 83 (CVI) each bind 5-amino-6-(D-ribitylamino)uracil. 86-87 (ET) lines the (2S)-2-hydroxy-3-oxobutyl phosphate pocket. H89 acts as the Proton donor in catalysis. Residue F114 participates in 5-amino-6-(D-ribitylamino)uracil binding. R128 serves as a coordination point for (2S)-2-hydroxy-3-oxobutyl phosphate.

The protein belongs to the DMRL synthase family.

It carries out the reaction (2S)-2-hydroxy-3-oxobutyl phosphate + 5-amino-6-(D-ribitylamino)uracil = 6,7-dimethyl-8-(1-D-ribityl)lumazine + phosphate + 2 H2O + H(+). Its pathway is cofactor biosynthesis; riboflavin biosynthesis; riboflavin from 2-hydroxy-3-oxobutyl phosphate and 5-amino-6-(D-ribitylamino)uracil: step 1/2. Functionally, catalyzes the formation of 6,7-dimethyl-8-ribityllumazine by condensation of 5-amino-6-(D-ribitylamino)uracil with 3,4-dihydroxy-2-butanone 4-phosphate. This is the penultimate step in the biosynthesis of riboflavin. This chain is 6,7-dimethyl-8-ribityllumazine synthase, found in Rhodopirellula baltica (strain DSM 10527 / NCIMB 13988 / SH1).